A 42-amino-acid chain; its full sequence is uncharacterized protein (42 aa).

This is an uncharacterized protein from Musa (BBTV).